A 204-amino-acid chain; its full sequence is Demethylsterigmatocystin 6-O-methyltransferase stcP (204 aa).

S-adenosyl-L-methionine-binding positions include 48-49, D73, 93-94, and R109; these read GG and DF. The Proton acceptor role is filled by H113.

It belongs to the class I-like SAM-binding methyltransferase superfamily. Cation-independent O-methyltransferase family.

It catalyses the reaction 6-demethylsterigmatocystin + S-adenosyl-L-methionine = sterigmatocystin + S-adenosyl-L-homocysteine + H(+). The protein operates within mycotoxin biosynthesis; sterigmatocystin biosynthesis. Functionally, norsolorinic acid reductase; part of the gene cluster that mediates the biosynthesis of sterigmatocystin (ST), a polyketide-derived furanocoumarin which is part of the most toxic and carcinogenic compounds among the known mycotoxins. The first step in the biosynthesis of sterigmatocystin is the production of hexanoate by the fatty acid synthase (FAS) units stcJ and stcK. The polyketide backbone is assembled by the non-reducing polyketide synthase stcA by condensation of the starter hexanoyl-CoA and 7 malonyl-CoA extender units followed by cyclization and release of norsolorinic acid. Norsolorinic acid is the first stable intermediate in the biosynthesis of sterigmatocystin and is converted into averantin (AVN) by the ketoreductase stcE which reduces the hexanoate ketone to an alcohol. Averantin is then oxidized into 5'-hydroxyaverantin (HAVN) by the cytochrome P450 monooxygenase stcF. 5'-hydroxyaverantin is further converted to 5'-oxyaverantin (OAVN) by the 5'-hydroxyaverantin dehydrogenase stcG. The next step is the conversion of OAVN into averufin (AVF) which is catalyzed by a yet to be identified enzyme. The cytochrome P450 monooxygenase stcB and the flavin-binding monooxygenase stcW are both required for the conversion of averufin to 1-hydroxyversicolorone. The esterase stcI probably catalyzes the formation of versiconal hemiacetal acetate from 1-hydroxyversicolorone. The oxydoreductase stcN then probably catalyzes the biosynthetic step from versiconal to versicolorin B (VERB). The next step is performed by the versicolorin B desaturase stcL to produce versicolorin A (VERA). The ketoreductase stcU and the cytochrome P450 monooxygenase stcS are involved in the conversion of versicolorin A to demethylsterigmatocystin. The Baeyer-Villiger oxidas stcQ and the reductase stcR might be involved in the biosynthetic step from versicolorin A to demethylsterigmatocystin. The final step in the biosynthesis of sterigmatocystin is the methylation of demethylsterigmatocystin catalyzed by the methyltransferase stcP. This is Demethylsterigmatocystin 6-O-methyltransferase stcP from Emericella nidulans (strain FGSC A4 / ATCC 38163 / CBS 112.46 / NRRL 194 / M139) (Aspergillus nidulans).